The primary structure comprises 338 residues: UDP-glucose 4-epimerase (338 aa).

NAD(+) is bound by residues 11–12 (YI), 31–36 (DNLCNS), 58–59 (DI), 80–84 (FAGLK), Asn99, Ser124, Tyr149, Lys153, and Phe178. Residues Ser124 and Tyr149 each coordinate substrate. The Proton acceptor role is filled by Tyr149. Residues Asn179, 199–200 (NL), 216–218 (AVF), Arg231, 292–295 (RDGD), and Tyr299 contribute to the substrate site.

This sequence belongs to the NAD(P)-dependent epimerase/dehydratase family. Homodimer. NAD(+) serves as cofactor.

The catalysed reaction is UDP-alpha-D-glucose = UDP-alpha-D-galactose. It participates in carbohydrate metabolism; galactose metabolism. Functionally, involved in the metabolism of galactose. Catalyzes the conversion of UDP-galactose (UDP-Gal) to UDP-glucose (UDP-Glc) through a mechanism involving the transient reduction of NAD. This Salmonella typhi protein is UDP-glucose 4-epimerase (galE).